The primary structure comprises 461 residues: tRNA modification GTPase MnmE (461 aa).

3 residues coordinate (6S)-5-formyl-5,6,7,8-tetrahydrofolate: R23, E88, and R127. The TrmE-type G domain maps to G223–F383. Position 233 (N233) interacts with K(+). GTP is bound by residues N233–S238, T252–T258, and D277–G280. S237 is a binding site for Mg(2+). K(+) is bound by residues T252, I254, and T257. A Mg(2+)-binding site is contributed by T258. K461 is a (6S)-5-formyl-5,6,7,8-tetrahydrofolate binding site.

It belongs to the TRAFAC class TrmE-Era-EngA-EngB-Septin-like GTPase superfamily. TrmE GTPase family. In terms of assembly, homodimer. Heterotetramer of two MnmE and two MnmG subunits. K(+) serves as cofactor.

It localises to the cytoplasm. Functionally, exhibits a very high intrinsic GTPase hydrolysis rate. Involved in the addition of a carboxymethylaminomethyl (cmnm) group at the wobble position (U34) of certain tRNAs, forming tRNA-cmnm(5)s(2)U34. In Clostridium botulinum (strain Langeland / NCTC 10281 / Type F), this protein is tRNA modification GTPase MnmE.